A 129-amino-acid chain; its full sequence is Virion-associated protein (129 aa).

2 coiled-coil regions span residues Met1 to Met31 and Ile38 to Asp59. Residues Pro122–Phe129 are capsid binding.

This sequence belongs to the caulimovirus ORF III family. As to quaternary structure, homotetramer, through coiled-coil domain. Homotrimer when interacts with icosehadral capsid. Interacts with capsid protein, and with Movement protein.

Its subcellular location is the virion. The protein resides in the host cell junction. The protein localises to the host plasmodesma. Its function is as follows. Plays a role in virus cell-to-cell and plant-to-plant transmission. Interacts with virion icosahedral capsid and movement protein, thereby facilitating virion cell-to-cell transmission through plasmodesmata opened by viral movement protein. Also interacts with aphid transmission factor, attaching the virion to aphid stylet when the animal feeds on an virus infected plant. Aphid saliva may later detach the virion, inducing release of infectious particles when the animal feeds on a new plant. The chain is Virion-associated protein from Arabidopsis thaliana (Mouse-ear cress).